A 142-amino-acid polypeptide reads, in one-letter code: Hemoglobin subunit alpha (142 aa).

The Globin domain occupies 2–142; that stretch reads VLSPADKSNV…VSTVLTSKYR (141 aa). Position 4 is a phosphoserine (S4). An N6-succinyllysine mark is found at K8 and K12. K17 is modified (N6-acetyllysine; alternate). At K17 the chain carries N6-succinyllysine; alternate. Y25 bears the Phosphotyrosine mark. S36 is subject to Phosphoserine. K41 is subject to N6-succinyllysine. S50 is modified (phosphoserine). H59 lines the O2 pocket. A heme b-binding site is contributed by H88. S103 bears the Phosphoserine mark. T109 bears the Phosphothreonine mark. A phosphoserine mark is found at S125 and S132. 2 positions are modified to phosphothreonine: T135 and T138. At S139 the chain carries Phosphoserine.

The protein belongs to the globin family. Heterotetramer of two alpha chains and two beta chains. Red blood cells.

Functionally, involved in oxygen transport from the lung to the various peripheral tissues. Its function is as follows. Hemopressin acts as an antagonist peptide of the cannabinoid receptor CNR1. Hemopressin-binding efficiently blocks cannabinoid receptor CNR1 and subsequent signaling. The chain is Hemoglobin subunit alpha (HBA) from Macaca fuscata fuscata (Japanese macaque).